Here is a 207-residue protein sequence, read N- to C-terminus: Sodium/potassium-transporting ATPase subunit beta-1-interacting protein 1 (207 aa).

The N-terminal stretch at 1-21 (MGKCSGRCTLVAFCCLQLVAA) is a signal peptide. Topologically, residues 22-34 (LERQIFDFLGYQW) are extracellular. The helical transmembrane segment at 35-55 (APILANFLHIMAVILGIFGTV) threads the bilayer. Topologically, residues 56–61 (QYRSRY) are cytoplasmic. The chain crosses the membrane as a helical span at residues 62 to 82 (LILYAAWLVLWVGWNAFIICF). Residues 83-146 (YLEVGQLSQD…GCLLDYPYIE (64 aa)) are Extracellular-facing. The N-linked (GlcNAc...) asparagine glycan is linked to asparagine 100. The helical transmembrane segment at 147–167 (ALSSALQIFLALFGFVFACYV) threads the bilayer. At 168–207 (SKVFLEEEDSFDFIGGFDSYGYQAPQKTSHLQLQPLYTSG) the chain is on the cytoplasmic side.

Belongs to the NKAIN family. As to quaternary structure, interacts with ATP1B1 C-terminus.

It localises to the cell membrane. The sequence is that of Sodium/potassium-transporting ATPase subunit beta-1-interacting protein 1 (NKAIN1) from Homo sapiens (Human).